We begin with the raw amino-acid sequence, 899 residues long: Suppressor of glycerol defect protein 1 (899 aa).

A compositionally biased stretch (basic and acidic residues) spans 24 to 33 (QDERFSISEG). Disordered regions lie at residues 24–181 (QDER…VSYP) and 248–326 (ETNS…DDSE). A compositionally biased stretch (basic residues) spans 34–49 (KKRRRGNGKHLSRKEK). The segment covering 65–77 (REINSSRLKSAPT) has biased composition (polar residues). A compositionally biased stretch (acidic residues) spans 103–126 (DESESNENWDSDEVLTDEVAEESG). 3 stretches are compositionally biased toward basic and acidic residues: residues 134–143 (ETMKKLESLK), 162–174 (SYEKKHIRNRDTN), and 251–264 (SMRKDDEASEKAFS). Residues 265–292 (SDDDLSASDFEDSDGLSESDNDSVADSD) are compositionally biased toward acidic residues. Positions 335–540 (SKKVNSSLNK…DTMSDLKNNR (206 aa)) constitute an MIF4G domain. An MI domain is found at 644–781 (DIRRAIFISI…KLDVFKHVPF (138 aa)). Phosphoserine is present on serine 736.

This sequence belongs to the CWC22 family. In terms of assembly, interacts with PLC1.

The protein localises to the nucleus. The protein resides in the nucleolus. Involved in osmoregulatory glycerol response, probably through its interaction with PLC1 which regulates the expression of GDP1. The chain is Suppressor of glycerol defect protein 1 (SGD1) from Saccharomyces cerevisiae (strain ATCC 204508 / S288c) (Baker's yeast).